The sequence spans 341 residues: MKAKKQETAATMKDVALKAKVSTATVSRALMNPDKVSQATRNRVEKAAREVGYLPQPMGRNVKRNESRTILVIVPDICDPFFSEIIRGIEVTAANHGYLVLIGDCAHQNQQEKTFIDLIITKQIDGMLLLGSRLPFDASIEEQRNLPPMVMANEFAPELELPTVHIDNLTAAFDAVNYLYEQGHKRIGCIAGPEEMPLCHYRLQGYVQALRRCGIMVDPQYIARGDFTFEAGSKAMQQLLDLPQPPTAVFCHSDVMALGALSQAKRQGLKVPEDLSIIGFDNIDLTQFCDPPLTTIAQPRYEIGREAMLLLLDQMQGQHVGSGSRLMDCELIIRGSTRALP.

Residues 10–64 (ATMKDVALKAKVSTATVSRALMNPDKVSQATRNRVEKAAREVGYLPQPMGRNVKR) enclose the HTH lacI-type domain. Positions 12-31 (MKDVALKAKVSTATVSRALM) form a DNA-binding region, H-T-H motif.

Its function is as follows. This protein negatively controls the transcription initiation of genes such as deoCABD, udp, and cdd encoding catabolizing enzymes and nupC, nupG, and tsx encoding transporting and pore-forming proteins. Binds cytidine and adenosine as effectors. This chain is HTH-type transcriptional repressor CytR (cytR), found in Escherichia coli (strain K12).